The following is a 141-amino-acid chain: MAVQRTFSIIKPDAVAKNVIGKITTRFEDAGLRVVASKLKQLSKAEAEGFYAEHSARGFFGELVAFMTSGPVVVQVLEGENAIARNRELMGATNPKEAAPGTIRADFAESIDANAVHGSDSEAAAAREIAYFFAATEVTTR.

ATP contacts are provided by lysine 11, phenylalanine 59, arginine 87, threonine 93, arginine 104, and asparagine 114. Catalysis depends on histidine 117, which acts as the Pros-phosphohistidine intermediate.

It belongs to the NDK family. In terms of assembly, homotetramer. Requires Mg(2+) as cofactor.

The protein localises to the cytoplasm. The catalysed reaction is a 2'-deoxyribonucleoside 5'-diphosphate + ATP = a 2'-deoxyribonucleoside 5'-triphosphate + ADP. It carries out the reaction a ribonucleoside 5'-diphosphate + ATP = a ribonucleoside 5'-triphosphate + ADP. Functionally, major role in the synthesis of nucleoside triphosphates other than ATP. The ATP gamma phosphate is transferred to the NDP beta phosphate via a ping-pong mechanism, using a phosphorylated active-site intermediate. The polypeptide is Nucleoside diphosphate kinase (Pseudomonas fluorescens (strain Pf0-1)).